Consider the following 873-residue polypeptide: Sister chromatid cohesion protein PDS5 homolog C (873 aa).

HEAT repeat units follow at residues 53–92, 99–136, 149–187, and 189–227; these read NALT…ITAP, DQMK…VAKV, ALLI…ESED, and PSEM…KLKT. Basic and acidic residues predominate over residues 266 to 301; it reads NEKEDSQGHIKRETEVEKAAEISTPERTDAPKDESG. Disordered stretches follow at residues 266–611 and 658–873; these read NEKE…LVGS and SPLD…KRKR. At Thr289 the chain carries Phosphothreonine. A compositionally biased stretch (polar residues) spans 303-319; that stretch reads SGVSNGVAQQNDSSVDT. A compositionally biased stretch (basic and acidic residues) spans 320–334; that stretch reads DSMKKQDDTGAKDEP. The segment covering 336-348 has biased composition (polar residues); sequence QLDNPRNTDLNNT. Composition is skewed to basic and acidic residues over residues 349 to 365 and 373 to 394; these read TEEK…KENE and DLSK…DSKD. Polar residues-rich tracts occupy residues 400–411 and 418–438; these read PVDSSVTAATSS and SVQI…SSPS. The segment covering 456–466 has biased composition (basic and acidic residues); sequence KKKESSTEEVK. Over residues 494 to 510 the composition is skewed to low complexity; the sequence is KVASSSKTKPTVPPSKK. Basic and acidic residues-rich tracts occupy residues 511–526 and 535–555; these read STSE…KKVV and TKPK…EESL. Over residues 661-681 the composition is skewed to acidic residues; sequence DESELSQDEEAADQTGQEEDA. Residues 701-725 are compositionally biased toward low complexity; the sequence is SSAKKGSGAGSSKAKATPASKSSKT. Positions 726 to 746 are enriched in basic and acidic residues; the sequence is SQDDKTASKSKDSKEASREEE. The span at 747–757 shows a compositional bias: acidic residues; the sequence is ASSEEESEEEE. Composition is skewed to low complexity over residues 795 to 814 and 822 to 831; these read KATT…PAKS and KSGSASTPAS. Basic and acidic residues predominate over residues 844–853; the sequence is ETPKEPEPAT. Residues 854–866 are compositionally biased toward low complexity; it reads KAKSGKSQGSQSK.

It belongs to the PDS5 family. Interacts with the cohesin complex.

It localises to the nucleus. Functionally, cohesin cofactor dispensable during the meiotic division but playing an important role in DNA repair by homologous recombination (HR) probably by helping SMC5/SMC6 complex. Regulator of sister chromatid cohesion in mitosis which may stabilize cohesin complex association with chromatin. May couple sister chromatid cohesion during mitosis to DNA replication. Cohesion ensures that chromosome partitioning is accurate in both meiotic and mitotic cells and plays an important role in DNA repair. This is Sister chromatid cohesion protein PDS5 homolog C from Arabidopsis thaliana (Mouse-ear cress).